A 569-amino-acid polypeptide reads, in one-letter code: 4-hydroxy-7-methoxy-3-oxo-3,4-dihydro-2H-1,4-benzoxazin-2-yl glucoside beta-D-glucosidase 1a, chloroplastic (569 aa).

The transit peptide at 1-50 directs the protein to the chloroplast; sequence MALLAAATLNPTTHLSLRSRAGRNSENLWLRSAASSQKSKGRFCNLTIRA. A beta-D-glucoside contacts are provided by residues Gln-92, His-194, and 239–240; that span reads NE. Residue Glu-240 is the Proton donor of the active site. Cys-259 and Cys-265 are joined by a disulfide. Residues Tyr-383, Glu-456, Trp-504, 511-512, and Phe-520 each bind a beta-D-glucoside; that span reads EW. Catalysis depends on Glu-456, which acts as the Nucleophile.

This sequence belongs to the glycosyl hydrolase 1 family. In terms of assembly, homo- and heterohexamers. In terms of tissue distribution, expressed in young seedlings early after germination.

The protein localises to the plastid. It localises to the chloroplast. The enzyme catalyses Hydrolysis of terminal, non-reducing beta-D-glucosyl residues with release of beta-D-glucose.. The catalysed reaction is DIMBOA beta-D-glucoside + H2O = DIMBOA + D-glucose. It catalyses the reaction DIBOA beta-D-glucoside + H2O = DIBOA + D-glucose. Its function is as follows. Acts in defense of young plant parts against pests via the production of hydroxamic acids from hydroxamic acid glucosides. Enzymatic activity is highly correlated with plant growth. The preferred substrate is DIMBOA-beta-D-glucoside. This chain is 4-hydroxy-7-methoxy-3-oxo-3,4-dihydro-2H-1,4-benzoxazin-2-yl glucoside beta-D-glucosidase 1a, chloroplastic (GLU1A), found in Triticum aestivum (Wheat).